The primary structure comprises 140 residues: MNSFALLLVCIQACLVQSVFSQCTSRAAVAADRGIIGGYGLGAPYGLGCGYGLEAPYGWAGYADYGYGLDAYGGIGEGNVAVAGELPVAGTTAVAGQVPIMGAVKFGGDVCAAGSVSIAGKCDCGCGEVYGYGLGAPYLY.

The signal sequence occupies residues 1-21; that stretch reads MNSFALLLVCIQACLVQSVFS.

This sequence belongs to the chorion protein family.

In terms of biological role, this protein is one of many from the eggshell of the gypsy moth. The protein is Chorion class A protein Ld2/Ld41 of Lymantria dispar (Gypsy moth).